A 131-amino-acid polypeptide reads, in one-letter code: Large ribosomal subunit protein bL20 (131 aa).

It belongs to the bacterial ribosomal protein bL20 family.

In terms of biological role, binds directly to 23S ribosomal RNA and is necessary for the in vitro assembly process of the 50S ribosomal subunit. It is not involved in the protein synthesizing functions of that subunit. This Mycolicibacterium paratuberculosis (strain ATCC BAA-968 / K-10) (Mycobacterium paratuberculosis) protein is Large ribosomal subunit protein bL20.